A 266-amino-acid polypeptide reads, in one-letter code: 22 kDa alpha-zein 8 (266 aa).

The signal sequence occupies residues 1-21 (MATKILALLALLALFVSATNA).

This sequence belongs to the zein family.

Functionally, zeins are major seed storage proteins. The sequence is that of 22 kDa alpha-zein 8 from Zea mays (Maize).